Reading from the N-terminus, the 193-residue chain is Acyl carrier protein phosphodiesterase (193 aa).

Belongs to the AcpH family.

The enzyme catalyses holo-[ACP] + H2O = apo-[ACP] + (R)-4'-phosphopantetheine + H(+). Functionally, converts holo-ACP to apo-ACP by hydrolytic cleavage of the phosphopantetheine prosthetic group from ACP. The protein is Acyl carrier protein phosphodiesterase of Klebsiella pneumoniae subsp. pneumoniae (strain ATCC 700721 / MGH 78578).